The chain runs to 529 residues: MAPEMDQFYRSTMAIYKSIMEQFNPALENLVYLGNNYLRAFHALSEAAEVYFSAIQKIGERALQSPTSQILGEILVQMSDTQRHLNSDLEVVVQTFHGGLLQHMEKNTKLDMQFIKDSRQHYELEYRHRAANLEKCMSELWRMERKRDKNVREMKESVNRLHAQMQAFVSESQRAAELEEKRRYRFLAEKHLLLSNTFLQFFGRARGMLQNRVLLWKEQSEASRSPSRAHSPGLLGPALGPPYPSGRLTPTCLDMPPRPLGEFSSPRSRHGSGSYGTEPDARPASQLEPDRRSLPRTPSASSLYSGSAQSSRSNSFGERPGGGGGARRVRALVSHSEGANHTLLRFSAGDVVEVLVPEAQNGWLYGKLEGSSASGWFPEAYVKALEEGPVNPMTPVTPMTSMTSMSPMTPMNPGNELPSRSYPLRGSHSLDDLLDRPGNSIAPSEYWDGQSRSRTPSRVPSRAPSPAPPPLPSSRRSSMGSTAVATDVKKLMSSEQYPPQELFPRGTNPFATVKLRPTITNDRSAPLIR.

One can recognise an IMD domain in the interval 1-239 (MAPEMDQFYR…HSPGLLGPAL (239 aa)). Disordered stretches follow at residues 221–327 (EASR…GGAR) and 403–510 (TSMS…TNPF). Phosphoserine is present on residues Ser-231, Ser-272, and Ser-302. Residues 299–313 (SASSLYSGSAQSSRS) are compositionally biased toward low complexity. The SH3 domain maps to 324 to 387 (GGARRVRALV…PEAYVKALEE (64 aa)). Low complexity-rich tracts occupy residues 403–413 (TSMSPMTPMNP) and 452–462 (RSRTPSRVPSR). A compositionally biased stretch (pro residues) spans 463–472 (APSPAPPPLP). Ser-478 and Ser-481 each carry phosphoserine.

Expressed in the epithelial layer of the intestine (at protein level).

It localises to the cell membrane. The protein localises to the cell junction. The protein resides in the cytoplasmic vesicle membrane. Its function is as follows. Phosphoinositides-binding protein that induces the formation of planar or gently curved membrane structures. Binds to phosphoinositides, including to phosphatidylinositol 4,5-bisphosphate (PtdIns(4,5)P2) headgroups. There seems to be no clear preference for a specific phosphoinositide. This Homo sapiens (Human) protein is BAR/IMD domain-containing adapter protein 2-like 2 (BAIAP2L2).